Consider the following 583-residue polypeptide: MRRLFLLLFMLFTTLAHAGNNPFEVKPDFLPVGKAFVFTSERLPSGETQLFWQIADGYYLYQKRLKFDGVAPELQPTLPAGEDHSDEFFGQQTVYRQGLEVKLPAAASGKVKLGWQGCADAGLCYPPQTLEVDLGGAPAVAASNVATTSNGSAQDQLLANDLQHKSWGLGLLAFFGFGLLLAFAPCSLPMLPILAGMVVGSGASPRRGLALASSYVLCMALVYAGMGVIAALLGSNLQAWLQQPWVLGSFAALFVLLSLPMFGFFELQMPALLRDRLEGASRQRQGGSLIGCGILGALSALLVGPCMTAPLAGGLLYIAQTGNALFGGLALFALGLGIGLPLLLLVTLGNRFLPKPGPWMNLLKGVFGILFLGTAIYMLRPVLNPGLWMGLWGALALVVAYCAWQQRAIAGRLLHLFGAGALLFAAWGGMLLVGAAGGGDDLWRPLKVYRGGPVANSVTAHDAFTTVKSPAELQGALDSARAQGQWVLLDYYADWCVSCKIMEKTVFGQPQVLEALKDVRLLRLDVTLDNADGRELLSRYKVPGPPSMLWIGPDGSERRSQRITGEVDANAFLQRWTQTREAR.

The signal sequence occupies residues 1-18 (MRRLFLLLFMLFTTLAHA). 2 cysteine pairs are disulfide-bonded: cysteine 118-cysteine 124 and cysteine 186-cysteine 306. 8 consecutive transmembrane segments (helical) span residues 168-188 (GLGL…PCSL), 214-234 (SYVL…ALLG), 245-265 (WVLG…FGFF), 289-309 (LIGC…CMTA), 326-346 (FGGL…LLLV), 359-379 (WMNL…IYML), 382-402 (VLNP…VAYC), and 413-433 (LLHL…MLLV). Residues 458–581 (VTAHDAFTTV…FLQRWTQTRE (124 aa)) form the Thioredoxin domain. A disulfide bond links cysteine 496 and cysteine 499.

It belongs to the thioredoxin family. DsbD subfamily.

The protein localises to the cell inner membrane. It carries out the reaction [protein]-dithiol + NAD(+) = [protein]-disulfide + NADH + H(+). It catalyses the reaction [protein]-dithiol + NADP(+) = [protein]-disulfide + NADPH + H(+). Required to facilitate the formation of correct disulfide bonds in some periplasmic proteins and for the assembly of the periplasmic c-type cytochromes. Acts by transferring electrons from cytoplasmic thioredoxin to the periplasm. This transfer involves a cascade of disulfide bond formation and reduction steps. The polypeptide is Thiol:disulfide interchange protein DsbD (Pseudomonas fluorescens (strain ATCC BAA-477 / NRRL B-23932 / Pf-5)).